The primary structure comprises 301 residues: B3 domain-containing protein At5g18090 (301 aa).

A DNA-binding region (TF-B3 1) is located at residues F18 to D113. Disordered regions lie at residues S123–Y142 and S153–V194. Positions N133–Y142 are enriched in basic and acidic residues. Positions V209–K301 form a DNA-binding region, TF-B3 2.

It is found in the nucleus. The chain is B3 domain-containing protein At5g18090 from Arabidopsis thaliana (Mouse-ear cress).